Consider the following 819-residue polypeptide: NEDD4-binding protein 1 (819 aa).

The segment covering Met1–Gly13 has biased composition (polar residues). A disordered region spans residues Met1–Val20. The KH-like domain occupies Lys80–Asp164. Over residues Asp226–Arg241 the composition is skewed to basic and acidic residues. 2 disordered regions span residues Asp226–Pro247 and Lys666–Arg736. The 153-residue stretch at Leu517 to Asp669 folds into the RNase NYN domain. Over residues Lys673 to Glu689 the composition is skewed to polar residues. The segment at Arg772 to Asp819 is coCUN.

This sequence belongs to the N4BP1 family.

The protein localises to the cytoplasm. Its subcellular location is the cytosol. It localises to the nucleus. The protein resides in the nucleolus. It is found in the PML body. Functionally, potent suppressor of cytokine production that acts as a regulator of innate immune signaling and inflammation. Acts as a key negative regulator of select cytokine and chemokine responses elicited by TRIF-independent Toll-like receptors (TLRs), thereby limiting inflammatory cytokine responses to minor insults. Has ribonuclease activity. The polypeptide is NEDD4-binding protein 1 (Xenopus tropicalis (Western clawed frog)).